The chain runs to 392 residues: L-rhamnonate dehydratase (392 aa).

Substrate-binding residues include H22 and R48. D214, E240, and E268 together coordinate Mg(2+). The Proton acceptor role is filled by H318. A substrate-binding site is contributed by E338.

Belongs to the mandelate racemase/muconate lactonizing enzyme family. RhamD subfamily. Homooctamer; tetramer of dimers. Mg(2+) is required as a cofactor.

The catalysed reaction is L-rhamnonate = 2-dehydro-3-deoxy-L-rhamnonate + H2O. Its function is as follows. Catalyzes the dehydration of L-rhamnonate to 2-keto-3-deoxy-L-rhamnonate (KDR). The protein is L-rhamnonate dehydratase of Paraburkholderia phytofirmans (strain DSM 17436 / LMG 22146 / PsJN) (Burkholderia phytofirmans).